We begin with the raw amino-acid sequence, 59 residues long: Potassium channel toxin alpha-KTx 3.10 (59 aa).

The first 22 residues, 1–22 (MKVFFAVLIALFVCSMVIGIHG), serve as a signal peptide directing secretion. 3 disulfide bridges follow: C30–C50, C36–C55, and C40–C57.

This sequence belongs to the short scorpion toxin superfamily. Potassium channel inhibitor family. Alpha-KTx 03 subfamily. Expressed by the venom gland.

Its subcellular location is the secreted. Inhibits insect potassium channel. Is at least a 100-fold more potent against the Drosophila Shaker channel than towards its mammalian homologs Kv1.1/KCNA1 and Kv1.3/KCNA3. The polypeptide is Potassium channel toxin alpha-KTx 3.10 (Buthus israelis (Israeli scorpion)).